We begin with the raw amino-acid sequence, 1002 residues long: yemanuclein (1002 aa).

The short motif at 80-85 is the Nuclear localization signal element; it reads KKKTKK. 3 disordered regions span residues 193-358, 395-428, and 642-725; these read AIIK…KKVV, VSTDVSSSDSSDMESEHGRADRQAGQHGKDGQEN, and KLKA…AKQV. Residues 207–217 show a composition bias toward low complexity; the sequence is SSSSESSSSSS. Residues 218 to 262 show a composition bias toward acidic residues; that stretch reads GDDDENDDGNNEEDDESDSEDDSEENDESDSEDDSESESLEDEDS. A run of 2 repeats spans residues 230 to 241 and 242 to 253. The tract at residues 230-253 is 2 X 12 AA tandem repeats; it reads EDDESDSEDDSEENDESDSEDDSE. Low complexity-rich tracts occupy residues 286–320, 336–358, and 395–404; these read TGKSKPSSSSLTSGKKPPTKPITTSSSSNSPRPST, QPSSQLQSLPQSQAQAQALKKVV, and VSTDVSSSDS. The segment covering 408–427 has biased composition (basic and acidic residues); it reads ESEHGRADRQAGQHGKDGQE. Positions 653 to 667 are enriched in low complexity; it reads PASASPKPVGVVSAP. The segment covering 679–689 has biased composition (basic and acidic residues); that stretch reads AVEDPRSRGNS. A phosphoserine mark is found at S685 and S689. A compositionally biased stretch (low complexity) spans 690-701; that stretch reads DTDSATSASSNS. Phosphoserine occurs at positions 885, 886, and 887. Positions 901–928 are disordered; the sequence is SKPQKKVQSKPKNKTQNRGRSSLGAVGQ. Over residues 903–917 the composition is skewed to basic residues; that stretch reads PQKKVQSKPKNKTQN.

The N-terminus is blocked. In terms of tissue distribution, oocyte specific.

It localises to the nucleus. The protein resides in the nucleoplasm. The protein localises to the chromosome. Its subcellular location is the centromere. It is found in the kinetochore. May play a key role in egg organization. May be a transcriptional regulator having a role in chromatin remodeling in concert with Hira, a histone chaperone. Involved in chromosome segregation by affecting kinetochores function in the first meiotic division. This is yemanuclein from Drosophila melanogaster (Fruit fly).